The primary structure comprises 311 residues: Alpha/beta hydrolase domain-containing protein 17C (311 aa).

The segment at E48–A67 is disordered. Residues S193, D258, and H287 each act as charge relay system in the active site.

This sequence belongs to the AB hydrolase superfamily. ABHD17 family. Post-translationally, palmitoylated on cysteine residues located in a cysteine cluster at the N-terminus which promotes membrane localization.

The protein resides in the recycling endosome membrane. The protein localises to the cell projection. It localises to the dendritic spine. It is found in the postsynaptic density membrane. It catalyses the reaction S-hexadecanoyl-L-cysteinyl-[protein] + H2O = L-cysteinyl-[protein] + hexadecanoate + H(+). Hydrolyzes fatty acids from S-acylated cysteine residues in proteins. Has depalmitoylating activity towards NRAS. In Xenopus laevis (African clawed frog), this protein is Alpha/beta hydrolase domain-containing protein 17C.